A 987-amino-acid polypeptide reads, in one-letter code: Centrosomal protein of 120 kDa (987 aa).

A C2 1 domain is found at 1-112 (MVSKSDQLLI…QETKQAPKWY (112 aa)). A disordered region spans residues 352-408 (KTQNEHEPHHSKKRVLTPIKENTHTGPQSPSESPVPPHNQSPPTKDDATESEVESLL). Residues 438-567 (SEAASGQKIA…LSSEKTRFLG (130 aa)) enclose the C2 2 domain. Residues 670–919 (ENQLKQKELA…RLRQQEQKQY (250 aa)) adopt a coiled-coil conformation. Residues 912-926 (RQQEQKQYPDSREIA) are compositionally biased toward basic and acidic residues. Residues 912–937 (RQQEQKQYPDSREIASGKMDGPHGSA) form a disordered region. At Ser-936 the chain carries Phosphoserine.

The protein belongs to the CEP120 family. As to quaternary structure, interacts with TACC2 and TACC3. Interacts with CCDC52.

The protein localises to the cytoplasm. It localises to the cytoskeleton. The protein resides in the microtubule organizing center. Its subcellular location is the centrosome. Functionally, plays a role in the microtubule-dependent coupling of the nucleus and the centrosome. Involved in the processes that regulate centrosome-mediated interkinetic nuclear migration (INM) of neural progenitors and for proper positioning of neurons during brain development. Also implicated in the migration and selfrenewal of neural progenitors. May play a role in centriole duplication during mitosis. Required for the recruitment of CEP295 to the proximal end of new-born centrioles at the centriolar microtubule wall during early S phase in a PLK4-dependent manner. This chain is Centrosomal protein of 120 kDa (CEP120), found in Bos taurus (Bovine).